Consider the following 63-residue polypeptide: Prokaryotic ubiquitin-like protein Pup (63 aa).

Residues 1 to 28 (MSDRQTQIPAGGGREDDHDDQVQSAGQV) are disordered. Residues 19-57 (DDQVQSAGQVQVNTEGVDDLLDEIDGLLENNAEEFVRSY) are ARC ATPase binding. An Isoglutamyl lysine isopeptide (Glu-Lys) (interchain with K-? in acceptor proteins) cross-link involves residue glutamate 63.

It belongs to the prokaryotic ubiquitin-like protein family. Strongly interacts with the proteasome-associated ATPase ARC through a hydrophobic interface; the interacting region of Pup lies in its C-terminal half. There is one Pup binding site per ARC hexamer ring.

Its pathway is protein degradation; proteasomal Pup-dependent pathway. In terms of biological role, protein modifier that is covalently attached to lysine residues of substrate proteins, thereby targeting them for proteasomal degradation. The tagging system is termed pupylation. The protein is Prokaryotic ubiquitin-like protein Pup of Corynebacterium efficiens (strain DSM 44549 / YS-314 / AJ 12310 / JCM 11189 / NBRC 100395).